The primary structure comprises 85 residues: Beta-insect depressant toxin LqhIT2 (85 aa).

The N-terminal stretch at 1 to 21 (MKLLLLLIVSASMLIESLVNA) is a signal peptide. The LCN-type CS-alpha/beta domain occupies 22 to 82 (DGYIKRRDGC…TWKSETNTCG (61 aa)). Cystine bridges form between cysteine 31–cysteine 81, cysteine 35–cysteine 56, cysteine 42–cysteine 63, and cysteine 46–cysteine 65. Glycine 82 is modified (glycine amide).

This sequence belongs to the long (4 C-C) scorpion toxin superfamily. Sodium channel inhibitor family. Beta subfamily. As to expression, expressed by the venom gland.

The protein resides in the secreted. Depressant insect beta-toxins cause a transient contraction paralysis followed by a slow flaccid paralysis. They bind voltage-independently at site-4 of sodium channels (Nav) and shift the voltage of activation toward more negative potentials thereby affecting sodium channel activation and promoting spontaneous and repetitive firing. This toxin is active only on insects. In Leiurus hebraeus (Hebrew deathstalker scorpion), this protein is Beta-insect depressant toxin LqhIT2.